Reading from the N-terminus, the 237-residue chain is Ribosomal RNA small subunit methyltransferase G (237 aa).

Residues Gly78, Phe83, 129–130, and Arg148 each bind S-adenosyl-L-methionine; that span reads AE. The tract at residues 218 to 237 is disordered; the sequence is KKETPNKYPRKAGMPNKRPL.

The protein belongs to the methyltransferase superfamily. RNA methyltransferase RsmG family.

Its subcellular location is the cytoplasm. Specifically methylates the N7 position of a guanine in 16S rRNA. This is Ribosomal RNA small subunit methyltransferase G from Streptococcus pneumoniae (strain JJA).